Here is a 413-residue protein sequence, read N- to C-terminus: RING-H2 finger protein ATL54 (413 aa).

The chain crosses the membrane as a helical span at residues 83-103 (ISIITITGAVLAILLTGFFLV). Residues 177–219 (CPVCLNEFEEDESLRLLPKCNHAFHISCIDTWLSSHTNCPLCR) form an RING-type; atypical zinc finger. Disordered regions lie at residues 238 to 258 (VTPGGSGSHLENDGVDEEDHG) and 321 to 413 (THVE…VFPL). Over residues 387 to 401 (SSSTLKTNGSSSSVS) the composition is skewed to low complexity. The segment covering 402–413 (CFNKNKSSVFPL) has biased composition (polar residues).

This sequence belongs to the RING-type zinc finger family. ATL subfamily.

Its subcellular location is the membrane. The enzyme catalyses S-ubiquitinyl-[E2 ubiquitin-conjugating enzyme]-L-cysteine + [acceptor protein]-L-lysine = [E2 ubiquitin-conjugating enzyme]-L-cysteine + N(6)-ubiquitinyl-[acceptor protein]-L-lysine.. Its pathway is protein modification; protein ubiquitination. The sequence is that of RING-H2 finger protein ATL54 (ATL54) from Arabidopsis thaliana (Mouse-ear cress).